The following is a 2282-amino-acid chain: Zonadhesin (2282 aa).

MAM domains lie at 1-147 (MFFA…PCGE) and 150-315 (PQCV…TCHV). Residues 1–2235 (MFFATGRASA…VLLPPKPDTS (2235 aa)) lie on the Extracellular side of the membrane. N112 and N272 each carry an N-linked (GlcNAc...) asparagine glycan. A 26 X approximate heptapeptide repeats (mucin-like domain) region spans residues 315-498 (VPVPPVIPIK…STTTTPSPTT (184 aa)). Low complexity predominate over residues 333–356 (PTVPAEGTTEPPEGTIELPEGTTK). The tract at residues 333 to 495 (PTVPAEGTTE…TTLSTTTTPS (163 aa)) is disordered. The span at 360-369 (ETTELPEEIT) shows a compositional bias: acidic residues. The segment covering 379 to 398 (TEPPTVPTEPPTVPTEPPTV) has biased composition (pro residues). 2 stretches are compositionally biased toward low complexity: residues 399-420 (PTEK…TSIP) and 427-495 (PTEK…TTPS). One can recognise a TIL 1 domain in the interval 501-550 (CPANAHYESCACPASCKHPKASCKPPCQPGCVCDPGLVFSNNSCIKASSC). Residues N541 and N569 are each glycosylated (N-linked (GlcNAc...) asparagine). The 55-residue stretch at 551 to 605 (PCLYNNNNYEPEAEWFSPNCTELCHCWPGGRIECQISQCKTHTKCQLKNGQYECQ) folds into the VWFC 1 domain. The 178-residue stretch at 610-787 (ATCFVYGDPH…WAQDEDKECQ (178 aa)) folds into the VWFD 1 domain. 2 cysteine pairs are disulfide-bonded: C612/C747 and C634/C786. A TIL 2 domain is found at 881-934 (CPPNSRYSLCTSPCPKTCHTGYVGMPCPEQCLEGCECNPGFILSGLECVPSAQC). A VWFC 2 domain is found at 935-990 (GCLDPSRGYFKVGEQWFKSDCKQLCICEGSNQIRCQPWKCGPHEVCSQQSGIYGCH). The VWFD 2 domain maps to 995–1176 (ATCSASGDPH…LEEGSETGCF (182 aa)). Intrachain disulfides connect C997/C1136 and C1019/C1175. N-linked (GlcNAc...) asparagine glycans are attached at residues N1141, N1259, N1270, N1355, N1467, and N1483. The 56-residue stretch at 1267-1322 (CPPNSSYSPCGSPCPGTCLSLNHPKDCPITLPCVEGCECQNGYILSGTSCVPLNQC) folds into the TIL 3 domain. The VWFC 3 domain maps to 1323–1379 (GCTDFEGSYHLVRESWYTDNTCSRLCTCSLHNNITCRQTACKPGQQCWAVDGLLRCR). In terms of domain architecture, VWFD 3 spans 1384-1564 (GVCQVTGDSR…KDNNIDPNCQ (181 aa)). Disulfide bonds link C1386–C1525 and C1408–C1563. The segment at 1561–1588 (PNCQKSQEGKGKPQEEQGPSGSSKKASC) is disordered. The segment covering 1577-1586 (QGPSGSSKKA) has biased composition (polar residues). Residue N1662 is glycosylated (N-linked (GlcNAc...) asparagine). A TIL 4 domain is found at 1670 to 1726 (CPAYSTYTNCLPSCSPSCFDPDGRCEGARAPSSCAEGCTCQPGYVLSKNKCVAKDQC). The VWFC 4 domain maps to 1727 to 1782 (SCRDAQGGSIPSGKSWVSSGCSQKCACTEGSIQCRAFHCPSRSHCKLNSNGNSNCV). A VWFD 4 domain is found at 1787-1963 (DQCSIFGGPH…SWEVKTEDSV (177 aa)). A disulfide bridge connects residues C1789 and C1926. A glycan (N-linked (GlcNAc...) asparagine) is linked at N1997. In terms of domain architecture, TIL 5 spans 2076 to 2129 (CPANTVYQSCMTPCPESCANLAAPRDCEGPCVEGCASLPGYAFSGAQSLPLANC). A VWFC 5 domain is found at 2130 to 2184 (GCTSNGIYYQLGHSFVTADCSQRCTCASSGVLLCEPFSCRPGESCTLGNLTRGCF). N-linked (GlcNAc...) asparagine glycosylation occurs at N2178. An EGF-like domain is found at 2185-2221 (RESPCLRNPCQNDGRCREQGTSFTCECEPGYGGHLCT). 3 disulfide bridges follow: C2189–C2200, C2194–C2209, and C2211–C2220. The chain crosses the membrane as a helical span at residues 2236–2256 (NLVAILLGMLVSLVVTVPVLA). The Cytoplasmic segment spans residues 2257–2282 (RKCVSRKRRRWREKTQSEPRSAPGRR).

As to quaternary structure, probably forms covalent oligomers.

The protein resides in the cell membrane. Binds in a species-specific manner to the zona pellucida of the egg. May be involved in gamete recognition and/or signaling. The sequence is that of Zonadhesin (ZAN) from Oryctolagus cuniculus (Rabbit).